An 844-amino-acid chain; its full sequence is SWI/SNF-related matrix-associated actin-dependent regulator of chromatin subfamily A containing DEAD/H box 1 homolog (844 aa).

Residues 1–23 (MSDSTVAASASASASSSAKSSLS) are compositionally biased toward low complexity. Disordered stretches follow at residues 1 to 75 (MSDS…TKLE) and 121 to 180 (NCKP…STKM). The segment covering 30–42 (INKNASSVVASPS) has biased composition (polar residues). One can recognise a Helicase ATP-binding domain in the interval 301–471 (TVMHKQEMNG…ISLLCFVMPK (171 aa)). 314-321 (DEMGLGKT) lines the ATP pocket. A DEGH box motif is present at residues 422–425 (DEAH). Residues 656-818 (YLDTLLPKLK…EQRCVVKLLT (163 aa)) enclose the Helicase C-terminal domain. A phosphoserine mark is found at serine 834, serine 838, and serine 841.

The protein belongs to the SNF2/RAD54 helicase family.

It localises to the nucleus. The enzyme catalyses ATP + H2O = ADP + phosphate + H(+). In terms of biological role, DNA helicase that possesses intrinsic ATP-dependent nucleosome-remodeling activity and is both required for DNA repair and heterochromatin organization. Promotes DNA end resection of double-strand breaks (DSBs) following DNA damage: probably acts by weakening histone DNA interactions in nucleosomes flanking DSBs. The polypeptide is SWI/SNF-related matrix-associated actin-dependent regulator of chromatin subfamily A containing DEAD/H box 1 homolog (Etl1) (Drosophila melanogaster (Fruit fly)).